Reading from the N-terminus, the 65-residue chain is Myotoxin-1 (65 aa).

Positions Met-1–Ala-22 are cleaved as a signal peptide. Disulfide bonds link Cys-26–Cys-58, Cys-33–Cys-52, and Cys-40–Cys-59.

It belongs to the crotamine-myotoxin family. Monomer. As to expression, expressed by the venom gland.

Its subcellular location is the secreted. In terms of biological role, cationic peptide that possesses multiple functions. It acts as a cell-penetrating peptide (CPP), and as a potent voltage-gated potassium channel (Kv) inhibitor. It exhibits antimicrobial activities, hind limb paralysis, and severe muscle necrosis by a non-enzymatic mechanism. In Crotalus durissus terrificus (South American rattlesnake), this protein is Myotoxin-1.